We begin with the raw amino-acid sequence, 379 residues long: MTKITGIIAEFNPFHKGHEYLLNQIDGLKIVAMSGNWMQRGEPAIFDKWTRAEMALSCGADLVVELPVMVSVQAADFFASGAVDILKNLGITDLAFGSESAIDYNEIADIYETKETEMESFIKALPDQLSYPEKTQMMWQHFTGIKFDGNTPNHVLALAYAKAAAGKNINLQAIKRVGKFHSTKLTEGFASATALRQQLFSLTDEVGQSLFSLTDLSAIENHVPSVILETYASPKTNWAAYFPLLQYKIRLDDHLENIFQVNQELSVRLKNAIKSAKNFDELVELVYTKRYTKARVRRLLTYILLNIPKEFNLPKEIHILGFSKAGQEILAQNRGKIISKIGQKPWDELTQKADEIYQLGNVDFKEQNFGRKPIIKREK.

ATP-binding positions include 8–21 (IAEF…HEYL), glycine 97, asparagine 153, and arginine 176.

The protein belongs to the TmcAL family.

It is found in the cytoplasm. It catalyses the reaction cytidine(34) in elongator tRNA(Met) + acetate + ATP = N(4)-acetylcytidine(34) in elongator tRNA(Met) + AMP + diphosphate. In terms of biological role, catalyzes the formation of N(4)-acetylcytidine (ac(4)C) at the wobble position of elongator tRNA(Met), using acetate and ATP as substrates. First activates an acetate ion to form acetyladenylate (Ac-AMP) and then transfers the acetyl group to tRNA to form ac(4)C34. This Lactococcus lactis subsp. cremoris (strain MG1363) protein is tRNA(Met) cytidine acetate ligase.